Reading from the N-terminus, the 205-residue chain is ATP-dependent Clp protease proteolytic subunit 2 (205 aa).

Ser100 serves as the catalytic Nucleophile. His125 is a catalytic residue.

It belongs to the peptidase S14 family. In terms of assembly, fourteen ClpP subunits assemble into 2 heptameric rings which stack back to back to give a disk-like structure with a central cavity, resembling the structure of eukaryotic proteasomes.

It is found in the cytoplasm. The enzyme catalyses Hydrolysis of proteins to small peptides in the presence of ATP and magnesium. alpha-casein is the usual test substrate. In the absence of ATP, only oligopeptides shorter than five residues are hydrolyzed (such as succinyl-Leu-Tyr-|-NHMec, and Leu-Tyr-Leu-|-Tyr-Trp, in which cleavage of the -Tyr-|-Leu- and -Tyr-|-Trp bonds also occurs).. Its function is as follows. Cleaves peptides in various proteins in a process that requires ATP hydrolysis. Has a chymotrypsin-like activity. Plays a major role in the degradation of misfolded proteins. This chain is ATP-dependent Clp protease proteolytic subunit 2, found in Chlamydia abortus (strain DSM 27085 / S26/3) (Chlamydophila abortus).